The primary structure comprises 273 residues: Large ribosomal subunit protein uL2 (273 aa).

The disordered stretch occupies residues 228–273 (VDHPHGGGEGKTSGGRHPVTPWGFPTKGKKTRKNKRTSKFIVKKRK). A compositionally biased stretch (basic residues) spans 254-273 (KGKKTRKNKRTSKFIVKKRK).

This sequence belongs to the universal ribosomal protein uL2 family. In terms of assembly, part of the 50S ribosomal subunit. Forms a bridge to the 30S subunit in the 70S ribosome.

Its function is as follows. One of the primary rRNA binding proteins. Required for association of the 30S and 50S subunits to form the 70S ribosome, for tRNA binding and peptide bond formation. It has been suggested to have peptidyltransferase activity; this is somewhat controversial. Makes several contacts with the 16S rRNA in the 70S ribosome. This Rickettsia rickettsii (strain Iowa) protein is Large ribosomal subunit protein uL2.